A 577-amino-acid chain; its full sequence is Scoloptoxin SSD14 (577 aa).

An N-terminal signal peptide occupies residues 1-25 (MGTSYRKLGYVLFLMLGMIVEEGIA).

In terms of assembly, heterodimer composed of subunits alpha and beta; probably disulfide-linked. In terms of tissue distribution, expressed by the venom gland.

The protein localises to the secreted. Its function is as follows. Dose-dependently induces human platelet aggregation on both plasma rich platelet and washed platelet (max. response at 3.2 ug/mL) and causes hemolysis against mouse and rabbit erythrocytes (35 and 65% respectively at 5 ug/mL). Does not show hemolytic activity against human erythrocytes (even at 100 ug/mL). The sequence is that of Scoloptoxin SSD14 from Scolopendra dehaani (Thai centipede).